The following is a 129-amino-acid chain: MAGEFSRTSRIGDQLQKELASLIQFEVKDPRLGLVTVNEVRVAKDLGYADIYYTVLGKDDQPEVLAENQAALDSAKGFLRRRLAQEVKLRVMPHLRFHYDQSVVNGSRMSALIDEAIRDDETKNGNEDE.

This sequence belongs to the RbfA family. In terms of assembly, monomer. Binds 30S ribosomal subunits, but not 50S ribosomal subunits or 70S ribosomes.

The protein resides in the cytoplasm. One of several proteins that assist in the late maturation steps of the functional core of the 30S ribosomal subunit. Associates with free 30S ribosomal subunits (but not with 30S subunits that are part of 70S ribosomes or polysomes). Required for efficient processing of 16S rRNA. May interact with the 5'-terminal helix region of 16S rRNA. This is Ribosome-binding factor A from Marinomonas sp. (strain MWYL1).